The chain runs to 93 residues: Large ribosomal subunit protein uL23 (93 aa).

This sequence belongs to the universal ribosomal protein uL23 family. Part of the 50S ribosomal subunit. Contacts protein L29, and trigger factor when it is bound to the ribosome.

Its function is as follows. One of the early assembly proteins it binds 23S rRNA. One of the proteins that surrounds the polypeptide exit tunnel on the outside of the ribosome. Forms the main docking site for trigger factor binding to the ribosome. The sequence is that of Large ribosomal subunit protein uL23 from Opitutus terrae (strain DSM 11246 / JCM 15787 / PB90-1).